We begin with the raw amino-acid sequence, 903 residues long: Dual serine/threonine and tyrosine protein kinase (903 aa).

Residues 382–414 (ANRKQEEMKEMIVETLESMKEQLLEDAANLEFT) are a coiled coil. Residues 627–881 (PKLGRELGRG…PLLGIVQPSL (255 aa)) form the Protein kinase domain. ATP contacts are provided by residues 633-641 (LGRGQYGVV) and lysine 656. Catalysis depends on aspartate 752, which acts as the Proton acceptor.

It belongs to the protein kinase superfamily. Ser/Thr protein kinase family.

The protein localises to the cytoplasm. The protein resides in the cell membrane. Its subcellular location is the apical cell membrane. It is found in the basolateral cell membrane. It localises to the cell junction. The catalysed reaction is L-seryl-[protein] + ATP = O-phospho-L-seryl-[protein] + ADP + H(+). The enzyme catalyses L-threonyl-[protein] + ATP = O-phospho-L-threonyl-[protein] + ADP + H(+). It catalyses the reaction L-tyrosyl-[protein] + ATP = O-phospho-L-tyrosyl-[protein] + ADP + H(+). In terms of biological role, may act as a positive regulator of ERK phosphorylation downstream of fibroblast growth factor-receptor activation. May induce both caspase-dependent apoptosis and caspase-independent cell death. May play a role in the embryonic development. The chain is Dual serine/threonine and tyrosine protein kinase from Pimephales promelas (Fathead minnow).